Consider the following 214-residue polypeptide: Probable transaldolase (214 aa).

Residue Lys-83 is the Schiff-base intermediate with substrate of the active site.

This sequence belongs to the transaldolase family. Type 3B subfamily.

The protein resides in the cytoplasm. The catalysed reaction is D-sedoheptulose 7-phosphate + D-glyceraldehyde 3-phosphate = D-erythrose 4-phosphate + beta-D-fructose 6-phosphate. The protein operates within carbohydrate degradation; pentose phosphate pathway; D-glyceraldehyde 3-phosphate and beta-D-fructose 6-phosphate from D-ribose 5-phosphate and D-xylulose 5-phosphate (non-oxidative stage): step 2/3. Functionally, transaldolase is important for the balance of metabolites in the pentose-phosphate pathway. This is Probable transaldolase from Geobacter sulfurreducens (strain ATCC 51573 / DSM 12127 / PCA).